A 224-amino-acid chain; its full sequence is Glycerol-3-phosphate acyltransferase (224 aa).

A run of 5 helical transmembrane segments spans residues 14 to 34 (FFPLAATLLGYLIGSLSFAVI), 64 to 84 (TAAIVTLLLDAAKGWLPVMLV), 98 to 118 (MALVGLAAFIGHLYPVFFNFA), 127 to 147 (LGVLLGLSPILALATGATWLI), and 160 to 180 (LTAAVFVPVYYVFGDGMAWYL).

It belongs to the PlsY family. Probably interacts with PlsX.

Its subcellular location is the cell inner membrane. The enzyme catalyses an acyl phosphate + sn-glycerol 3-phosphate = a 1-acyl-sn-glycero-3-phosphate + phosphate. It functions in the pathway lipid metabolism; phospholipid metabolism. In terms of biological role, catalyzes the transfer of an acyl group from acyl-phosphate (acyl-PO(4)) to glycerol-3-phosphate (G3P) to form lysophosphatidic acid (LPA). This enzyme utilizes acyl-phosphate as fatty acyl donor, but not acyl-CoA or acyl-ACP. The chain is Glycerol-3-phosphate acyltransferase from Albidiferax ferrireducens (strain ATCC BAA-621 / DSM 15236 / T118) (Rhodoferax ferrireducens).